A 237-amino-acid chain; its full sequence is Small ribosomal subunit protein uS2m (237 aa).

Belongs to the universal ribosomal protein uS2 family.

It localises to the mitochondrion. The protein is Small ribosomal subunit protein uS2m (RPS2) of Marchantia polymorpha (Common liverwort).